The sequence spans 118 residues: Probable mitochondrial pyruvate carrier 2 (118 aa).

Helical transmembrane passes span 19 to 35, 50 to 66, and 72 to 94; these read VHFW…LSGI, YAAL…WSLI, and YFNA…RILV.

Belongs to the mitochondrial pyruvate carrier (MPC) (TC 2.A.105) family. As to quaternary structure, the functional 150 kDa pyruvate import complex is a heteromer of mpc1 and mpc2.

It is found in the mitochondrion inner membrane. In terms of biological role, mediates the uptake of pyruvate into mitochondria. The sequence is that of Probable mitochondrial pyruvate carrier 2 from Schizosaccharomyces pombe (strain 972 / ATCC 24843) (Fission yeast).